We begin with the raw amino-acid sequence, 195 residues long: A-type ATP synthase subunit E (195 aa).

Belongs to the V-ATPase E subunit family. In terms of assembly, has multiple subunits with at least A(3), B(3), C, D, E, F, H, I and proteolipid K(x).

It localises to the cell membrane. In terms of biological role, component of the A-type ATP synthase that produces ATP from ADP in the presence of a proton gradient across the membrane. The sequence is that of A-type ATP synthase subunit E from Halobacterium salinarum (strain ATCC 29341 / DSM 671 / R1).